A 127-amino-acid polypeptide reads, in one-letter code: Small ribosomal subunit protein uS11 (127 aa).

Belongs to the universal ribosomal protein uS11 family. Part of the 30S ribosomal subunit. Interacts with proteins S7 and S18. Binds to IF-3.

Located on the platform of the 30S subunit, it bridges several disparate RNA helices of the 16S rRNA. Forms part of the Shine-Dalgarno cleft in the 70S ribosome. The sequence is that of Small ribosomal subunit protein uS11 from Flavobacterium johnsoniae (strain ATCC 17061 / DSM 2064 / JCM 8514 / BCRC 14874 / CCUG 350202 / NBRC 14942 / NCIMB 11054 / UW101) (Cytophaga johnsonae).